Here is a 206-residue protein sequence, read N- to C-terminus: uncharacterized protein (206 aa).

Positions 1–22 (MPKLRLIGLTLLALSATAVSHA) are cleaved as a signal peptide. An SH3b domain is found at 23 to 89 (EETRYVSDEL…IPLKQLSTEP (67 aa)). A helical transmembrane segment spans residues 169 to 191 (IIMQWFMYGGGVLGLGLLLGLVL).

To H.influenzae HI_1605.

The protein localises to the membrane. This is an uncharacterized protein from Escherichia coli O157:H7.